A 551-amino-acid chain; its full sequence is Eukaryotic translation initiation factor 3 subunit D-2 (551 aa).

Residues 108 to 152 form a disordered region; the sequence is RTRGRTGRGTPNIASLGGSTAGGATASSTKYGKGRHTRNTQNVGR. Positions 115 to 136 are enriched in low complexity; sequence RGTPNIASLGGSTAGGATASST. The interval 290-304 is RNA gate; the sequence is QFDLLTVNETSVEPP. The interval 527 to 551 is disordered; that stretch reads PENAFDSDRDEEEESSEPLSNSNDN.

The protein belongs to the eIF-3 subunit D family. As to quaternary structure, component of the eukaryotic translation initiation factor 3 (eIF-3) complex. The eIF-3 complex interacts with pix.

Its subcellular location is the cytoplasm. In terms of biological role, mRNA cap-binding component of the eukaryotic translation initiation factor 3 (eIF-3) complex, which is involved in protein synthesis of a specialized repertoire of mRNAs and, together with other initiation factors, stimulates binding of mRNA and methionyl-tRNAi to the 40S ribosome. The eIF-3 complex specifically targets and initiates translation of a subset of mRNAs involved in cell proliferation. In the eIF-3 complex, eif3d specifically recognizes and binds the 7-methylguanosine cap of a subset of mRNAs. This Drosophila simulans (Fruit fly) protein is Eukaryotic translation initiation factor 3 subunit D-2.